An 83-amino-acid polypeptide reads, in one-letter code: Delta-conotoxin-like Ac6.1 (83 aa).

Residues 1–22 form the signal peptide; that stretch reads MKLTCVVIVAVLFLTAWTFVMA. A propeptide spanning residues 23–51 is cleaved from the precursor; sequence DDSRYGLKDLFPKARHEMKNPEASKLNKR. Disulfide bonds link Cys54–Cys69, Cys61–Cys73, and Cys68–Cys78. Pro57 and Pro65 each carry 4-hydroxyproline.

The protein belongs to the conotoxin O1 superfamily. As to expression, expressed by the venom duct.

The protein resides in the secreted. Delta-conotoxins bind to site 6 of voltage-gated sodium channels (Nav) and inhibit the inactivation process. The sequence is that of Delta-conotoxin-like Ac6.1 from Conus achatinus (Little frog cone).